Consider the following 484-residue polypeptide: MADDESRTILLEKNEDCPGCIIDRTKQQQRGVPYLHLSFIWLVSLCTALPISSLFPYIYFMIRDFHIAKQEEDIGFYAGFVGSSFMIGRALTSIFWGKLADRYGRKPIILIGTFSVIIFNTLFGLSTSFWLAISVRFLLGCFNCLLGVIRAYASEVVSEEYNALSLSVVSTSRGIGLILGPAIGGYLAQPAEKYPNIFSQSSVFGRFPYFLPSLVISVYATAVLIACWWLPETLHTRCRIAQGRLNPTELNDDESRGGGLDEQKIINKPSLLRNRPLMAIIIVYCVFSLQEIAYNEIFSLWAVSDRSYGGLSFSSQDVGEVLAISGLGLLVFQLLVYPPLEKSVGLLAVIRLSAVLLIPLLSCYPYIALLSGVTLHLVINCASIIKNALSISLVTGLFIMLNKAVPQNQRGAANGISMTAMSVFKSFGPAGGGVLFSWAQKRQDATFLPGQIFAPCDEMVFLVLNLVQLVGLILTFIPYISQIQ.

The next 12 helical transmembrane spans lie at 39 to 59, 76 to 96, 107 to 127, 129 to 149, 168 to 188, 210 to 230, 278 to 298, 318 to 338, 355 to 375, 381 to 401, 416 to 436, and 460 to 480; these read FIWL…PYIY, FYAG…SIFW, PIIL…GLST, FWLA…LGVI, VVST…GYLA, FLPS…CWWL, MAII…NEIF, VGEV…LVYP, VLLI…GVTL, CASI…FIML, ISMT…GVLF, and VFLV…IPYI.

Belongs to the major facilitator superfamily.

The protein resides in the membrane. This Arabidopsis thaliana (Mouse-ear cress) protein is Probable peptide/nitrate transporter At3g43790 (ZIFL2).